Here is a 258-residue protein sequence, read N- to C-terminus: Pimeloyl-[acyl-carrier protein] methyl ester esterase (258 aa).

One can recognise an AB hydrolase-1 domain in the interval 16 to 242 (LVLLHGWGLN…AAHAPFISHP (227 aa)). Residues Trp22, 82–83 (SM), and 143–147 (FLALQ) contribute to the substrate site. Ser82 (nucleophile) is an active-site residue. Active-site residues include Asp207 and His235. His235 provides a ligand contact to substrate.

This sequence belongs to the AB hydrolase superfamily. Carboxylesterase BioH family. As to quaternary structure, monomer.

It is found in the cytoplasm. It catalyses the reaction 6-carboxyhexanoyl-[ACP] methyl ester + H2O = 6-carboxyhexanoyl-[ACP] + methanol + H(+). The protein operates within cofactor biosynthesis; biotin biosynthesis. Its function is as follows. The physiological role of BioH is to remove the methyl group introduced by BioC when the pimeloyl moiety is complete. It allows to synthesize pimeloyl-ACP via the fatty acid synthetic pathway through the hydrolysis of the ester bonds of pimeloyl-ACP esters. The chain is Pimeloyl-[acyl-carrier protein] methyl ester esterase from Yersinia pseudotuberculosis serotype O:1b (strain IP 31758).